Reading from the N-terminus, the 472-residue chain is Collagenase 3 (472 aa).

The N-terminal stretch at 1–19 is a signal peptide; the sequence is MHPGVLAAFLFLSWTRCWS. The propeptide at 20-104 is activation peptide; that stretch reads LPVPNDDDDD…PRCGVPDVGE (85 aa). A Cysteine switch motif is present at residues 95–102; it reads PRCGVPDV. Cys-97 contacts Zn(2+). Asn-118 is a glycosylation site (N-linked (GlcNAc...) asparagine). Asp-129 is a Ca(2+) binding site. Residues Asn-153 and Asn-159 are each glycosylated (N-linked (GlcNAc...) asparagine). Ca(2+) is bound at residue Asp-163. Residues His-173 and Asp-175 each contribute to the Zn(2+) site. The segment at 177 to 247 is interaction with TIMP2; it reads YPFDGPSGLL…GALMFPIYTY (71 aa). 4 residues coordinate Ca(2+): Asp-180, Gly-181, Ser-183, and Leu-185. His-188 is a Zn(2+) binding site. Positions 195, 197, and 199 each coordinate Ca(2+). Zn(2+) is bound at residue His-201. 3 residues coordinate Ca(2+): Asp-203, Asp-204, and Glu-206. Position 223 (His-223) interacts with Zn(2+). Glu-224 is a catalytic residue. The Zn(2+) site is built by His-227, His-233, and Met-241. Residues 269–472 are interaction with collagen; sequence PGDEDPNPKH…VMPTNSLLWC (204 aa). Hemopexin repeat units follow at residues 282-331, 332-378, 380-428, and 429-472; these read PDKC…WPEL, PNRI…GFPK, VKKI…FPGI, and GDKV…LLWC. Cysteines 285 and 472 form a disulfide. 4 residues coordinate Ca(2+): Asp-292, Ile-294, Asp-336, and Ala-338. Tyr-367 carries the phosphotyrosine; by PKDCC modification. Residues Ser-384, Ala-386, Asp-433, and Val-435 each contribute to the Ca(2+) site.

The protein belongs to the peptidase M10A family. Requires Ca(2+) as cofactor. Zn(2+) serves as cofactor. Post-translationally, the proenzyme is activated by removal of the propeptide; this cleavage can be effected by other matrix metalloproteinases, such as MMP2, MMP3 and MMP14 and may involve several cleavage steps. Cleavage can also be autocatalytic, after partial maturation by another protease or after treatment with 4-aminophenylmercuric acetate (APMA) (in vitro). In terms of processing, N-glycosylated. Tyrosine phosphorylated by PKDCC/VLK. As to expression, seems to be specific to breast carcinomas.

It localises to the secreted. It is found in the extracellular space. Its subcellular location is the extracellular matrix. Its function is as follows. Plays a role in the degradation of extracellular matrix proteins including fibrillar collagen, fibronectin, TNC and ACAN. Cleaves triple helical collagens, including type I, type II and type III collagen, but has the highest activity with soluble type II collagen. Can also degrade collagen type IV, type XIV and type X. May also function by activating or degrading key regulatory proteins, such as TGFB1 and CCN2. Plays a role in wound healing, tissue remodeling, cartilage degradation, bone development, bone mineralization and ossification. Required for normal embryonic bone development and ossification. Plays a role in the healing of bone fractures via endochondral ossification. Plays a role in wound healing, probably by a mechanism that involves proteolytic activation of TGFB1 and degradation of CCN2. Plays a role in keratinocyte migration during wound healing. May play a role in cell migration and in tumor cell invasion. The protein is Collagenase 3 (MMP13) of Equus caballus (Horse).